Reading from the N-terminus, the 500-residue chain is Nucleolar and spindle-associated protein 1 (500 aa).

4 disordered regions span residues 48 to 204 (KNET…NFKK), 241 to 299 (TKKS…ASKS), 319 to 353 (VRFS…PESE), and 365 to 500 (ELLP…VPVK). Basic residues predominate over residues 82–92 (THRRGRGRKPI). The segment covering 113-127 (NMASSIDRTQQQNCT) has biased composition (polar residues). Over residues 264–274 (SRLSLLSPLPR) the composition is skewed to low complexity. A compositionally biased stretch (polar residues) spans 276–298 (TGASPSRTPMSQRRSCRSSTASK). Residues 323–332 (EATKDNEHKR) show a composition bias toward basic and acidic residues. Residues 380–392 (ITLNTTTQPSPAT) are compositionally biased toward polar residues. Over residues 442–451 (PWGESKENKP) the composition is skewed to basic and acidic residues. Over residues 452–469 (DPNSNVSVLKNNYKQPHL) the composition is skewed to polar residues.

This sequence belongs to the NUSAP family. As to quaternary structure, interacts with DNA, microtubules, ipo7, kpna2 and kpnb1. Microtubule stabilization is inhibited by ipo7 and kpna2, while microtubule bundling is inhibited by kpnb1. Active GTP-bound ran causes dissociation of ipo7 and kpnb1.

Its subcellular location is the cytoplasm. It localises to the nucleus. The protein resides in the cytoskeleton. The protein localises to the spindle. Its function is as follows. Microtubule-associated protein with the capacity to bundle and stabilize microtubules. May associate with chromosomes and promote the organization of meiotic or mitotic spindle microtubules around them. This is Nucleolar and spindle-associated protein 1 (nusap1) from Xenopus tropicalis (Western clawed frog).